Here is a 404-residue protein sequence, read N- to C-terminus: Argininosuccinate synthase (404 aa).

Residue 15 to 23 coordinates ATP; that stretch reads AYSGGLDTS. L-citrulline is bound at residue Tyr94. Gly124 is an ATP binding site. Thr126, Asn130, and Asp131 together coordinate L-aspartate. Asn130 is an L-citrulline binding site. The L-citrulline site is built by Arg134, Ser182, Glu266, and Tyr278.

It belongs to the argininosuccinate synthase family. Type 1 subfamily. Homotetramer.

The protein localises to the cytoplasm. It catalyses the reaction L-citrulline + L-aspartate + ATP = 2-(N(omega)-L-arginino)succinate + AMP + diphosphate + H(+). The protein operates within amino-acid biosynthesis; L-arginine biosynthesis; L-arginine from L-ornithine and carbamoyl phosphate: step 2/3. The polypeptide is Argininosuccinate synthase (Streptomyces avermitilis (strain ATCC 31267 / DSM 46492 / JCM 5070 / NBRC 14893 / NCIMB 12804 / NRRL 8165 / MA-4680)).